Consider the following 557-residue polypeptide: MTSAAPAKKPYRKAPPEHRELRLEIPGSRLEQEEPLTDAERMKLLQEENEELRRRLASATRRTEALERELEIGQDCLELELGQSREELDKFKDKFRRLQNSYTASQRTNQELEDKLHTLASLSHSWIFAIKKAEMDRKTLDWEIVELTNKLLDAKNTINKLEELNERYRLDCNLAVQLLKCNKSHFRNHKFADLPCELQDMVRKHLHSGQEAASPGPAPSLAPGAVVPTSVIARVLEKPESLLLNSAQSGSAGRPLAEDVFVHVDMSEGVPGDPASPPAPGSPTPQPNGECHSLGTARGSPEEELPLPAFEKLNPYPTPSPPHPLYPGRRVIEFSEDKVRIPRNSPLPNCTYATRQAISLSLVEEGSERARPSPVPSTPASAQASPHHQPSPAPLTLSAPASSASSEEDLLVSWQRAFVDRTPPPAAVAQRTAFGRDALPELQRHFAHSPADRDEVVQAPSARPEESELLLPTEPDSGFPREEEELNLPISPEEERQSLLPINRGTEEGPGTSHTEGRAWPLPSSSRPQRSPKRMGVHHLHRKDSLTQAQEQGNLLN.

A disordered region spans residues 1-37; that stretch reads MTSAAPAKKPYRKAPPEHRELRLEIPGSRLEQEEPLT. Residue T2 is modified to N-acetylthreonine. Residues 14 to 23 show a composition bias toward basic and acidic residues; the sequence is APPEHRELRL. The stretch at 42–171 forms a coiled coil; it reads MKLLQEENEE…EELNERYRLD (130 aa). Disordered regions lie at residues 266 to 303 and 309 to 328; these read MSEGVPGDPASPPAPGSPTPQPNGECHSLGTARGSPEE and AFEKLNPYPTPSPPHPLYPG. Pro residues predominate over residues 274 to 286; it reads PASPPAPGSPTPQ. A Phosphoserine modification is found at S300. The span at 316 to 325 shows a compositional bias: pro residues; it reads YPTPSPPHPL. T318 bears the Phosphothreonine mark. A phosphoserine mark is found at S320 and S345. A disordered region spans residues 364–409; it reads EEGSERARPSPVPSTPASAQASPHHQPSPAPLTLSAPASSASSEED. Residues 378-388 are compositionally biased toward polar residues; the sequence is TPASAQASPHH. A compositionally biased stretch (low complexity) spans 394–405; the sequence is PLTLSAPASSAS. T422 carries the post-translational modification Phosphothreonine. Residues 439–456 show a composition bias toward basic and acidic residues; it reads LPELQRHFAHSPADRDEV. The disordered stretch occupies residues 439–557; sequence LPELQRHFAH…QAQEQGNLLN (119 aa). The residue at position 491 (S491) is a Phosphoserine. Positions 530–542 are enriched in basic residues; it reads RSPKRMGVHHLHR. S545 is modified (phosphoserine). Positions 546 to 557 are enriched in polar residues; it reads LTQAQEQGNLLN.

As to quaternary structure, interacts with DLG1. Interacts with ARF6 (GTP-bound form). In terms of tissue distribution, ubiquitously expressed.

The protein resides in the golgi apparatus. Its subcellular location is the trans-Golgi network. It is found in the cell junction. The protein localises to the tight junction. It localises to the cell membrane. Functionally, plays a role in regulating the structure of the Golgi apparatus. The chain is Tight junction-associated protein 1 from Homo sapiens (Human).